The chain runs to 431 residues: Cleavage stimulation factor subunit 1 (431 aa).

WD repeat units lie at residues 106–145, 171–210, 215–254, 260–301, 303–343, and 395–431; these read SHKG…AKSA, DHVD…AKRA, QEAE…CFVS, QHTD…TTFE, AHDG…TLVR, and GHNN…STTD.

As to quaternary structure, homodimer. The CSTF complex is composed of CSTF1 (50 kDa subunit), CSTF2 (64 kDa subunit) and CSTF3 (77 kDa subunit). Interacts (via repeats WD) directly with CSTF3. Interacts (via repeat WD6) with BARD1. Interacts with ERCC6.

The protein resides in the nucleus. In terms of biological role, one of the multiple factors required for polyadenylation and 3'-end cleavage of mammalian pre-mRNAs. May be responsible for the interaction of CSTF with other factors to form a stable complex on the pre-mRNA. The protein is Cleavage stimulation factor subunit 1 (Cstf1) of Mus musculus (Mouse).